Consider the following 154-residue polypeptide: 6,7-dimethyl-8-ribityllumazine synthase (154 aa).

Residues F22, 56-58 (AFE), and 80-82 (TVI) contribute to the 5-amino-6-(D-ribitylamino)uracil site. Position 85 to 86 (85 to 86 (AT)) interacts with (2S)-2-hydroxy-3-oxobutyl phosphate. The active-site Proton donor is the H88. Position 113 (F113) interacts with 5-amino-6-(D-ribitylamino)uracil. A (2S)-2-hydroxy-3-oxobutyl phosphate-binding site is contributed by R127.

It belongs to the DMRL synthase family. As to quaternary structure, forms an icosahedral capsid composed of 60 subunits, arranged as a dodecamer of pentamers.

The enzyme catalyses (2S)-2-hydroxy-3-oxobutyl phosphate + 5-amino-6-(D-ribitylamino)uracil = 6,7-dimethyl-8-(1-D-ribityl)lumazine + phosphate + 2 H2O + H(+). Its pathway is cofactor biosynthesis; riboflavin biosynthesis; riboflavin from 2-hydroxy-3-oxobutyl phosphate and 5-amino-6-(D-ribitylamino)uracil: step 1/2. In terms of biological role, catalyzes the formation of 6,7-dimethyl-8-ribityllumazine by condensation of 5-amino-6-(D-ribitylamino)uracil with 3,4-dihydroxy-2-butanone 4-phosphate. This is the penultimate step in the biosynthesis of riboflavin. The sequence is that of 6,7-dimethyl-8-ribityllumazine synthase from Bacillus amyloliquefaciens (Bacillus velezensis).